The primary structure comprises 418 residues: FK506-binding protein 3 (418 aa).

3 disordered regions span residues 49 to 133, 172 to 273, and 289 to 309; these read PSTL…DDEF, SLTG…ETKK, and LEEG…KPKT. Positions 61–89 are enriched in acidic residues; the sequence is YDDEDDAGGLLGDYDEDELDISEEEEEEE. Basic residues predominate over residues 93–103; sequence KSKKGKGKGKS. Acidic residues-rich tracts occupy residues 108 to 133 and 186 to 224; these read EEEE…DDEF and GYDD…DASD. A compositionally biased stretch (basic and acidic residues) spans 225-239; that stretch reads VEAKIQELVEKEQSK. Positions 251–264 are enriched in acidic residues; sequence PEEEEEEEEEEEEE. The PPIase FKBP-type domain maps to 332–418; it reads GSKVGMRYIG…TFDVKLVSLK (87 aa).

It belongs to the FKBP-type PPIase family. FKBP3/4 subfamily.

Its subcellular location is the nucleus. The protein localises to the nucleolus. It carries out the reaction [protein]-peptidylproline (omega=180) = [protein]-peptidylproline (omega=0). Inhibited by both FK506 and rapamycin. PPIases accelerate the folding of proteins. It catalyzes the cis-trans isomerization of proline imidic peptide bonds in oligopeptides. The sequence is that of FK506-binding protein 3 (FPR3) from Kluyveromyces lactis (strain ATCC 8585 / CBS 2359 / DSM 70799 / NBRC 1267 / NRRL Y-1140 / WM37) (Yeast).